A 414-amino-acid polypeptide reads, in one-letter code: Wilms tumor protein homolog A (414 aa).

Residues Lys55 and Lys158 each participate in a glycyl lysine isopeptide (Lys-Gly) (interchain with G-Cter in SUMO) cross-link. The short motif at Met217–Gly225 is the 9aaTAD element. 3 consecutive C2H2-type zinc fingers follow at residues Phe288 to His312, Tyr318 to His342, and Phe348 to His370. 2 important for interaction with target DNA regions span residues Ser332–Lys346 and Ser358–His366. Positions Lys373–Ser375 match the KTS motif motif. The segment at Phe379–His403 adopts a C2H2-type 4 zinc-finger fold.

Belongs to the EGR C2H2-type zinc-finger protein family. Expressed around the pronephric anlage and in the pronephros; expression is restricted to the splanchnic mesoderm (the site where the glomus forms) from tailbud stages, and the glomus of early tadpoles. Not expressed in the pronephric tubules or pronephric duct. In tadpoles (stage 38-39), additional expression begins in the heart. Also expressed in the adult kidney (mesonephros).

The protein localises to the nucleus. It is found in the cytoplasm. Its subcellular location is the nucleus speckle. Transcription factor required for development of the vascular component of the pronephric kidney, the glomus; may repress tubule-specific gene expression in the portion of the pronephros fated to form the glomus. Recognizes and binds to the DNA sequence 5'-GCG(T/G)GGGCG-3'. Inhibits Wnt-signaling during embryonic development. Function may be isoform-specific: the isoform containing the KTS motif is less effective in inhibiting wnt signaling. The polypeptide is Wilms tumor protein homolog A (wt1-a) (Xenopus laevis (African clawed frog)).